Reading from the N-terminus, the 367-residue chain is Phosphoribosylaminoimidazole-succinocarboxamide synthase (367 aa).

This sequence belongs to the SAICAR synthetase family.

The catalysed reaction is 5-amino-1-(5-phospho-D-ribosyl)imidazole-4-carboxylate + L-aspartate + ATP = (2S)-2-[5-amino-1-(5-phospho-beta-D-ribosyl)imidazole-4-carboxamido]succinate + ADP + phosphate + 2 H(+). It participates in purine metabolism; IMP biosynthesis via de novo pathway; 5-amino-1-(5-phospho-D-ribosyl)imidazole-4-carboxamide from 5-amino-1-(5-phospho-D-ribosyl)imidazole-4-carboxylate: step 1/2. This is Phosphoribosylaminoimidazole-succinocarboxamide synthase from Shewanella sp. (strain W3-18-1).